We begin with the raw amino-acid sequence, 318 residues long: Ribose-phosphate pyrophosphokinase 3 (318 aa).

96 to 101 lines the ATP pocket; it reads RQDKKD. Mg(2+) contacts are provided by Asp128, His130, Asp139, and Asp143. Residue His130 coordinates ATP. The segment at 212 to 227 is binding of phosphoribosylpyrophosphate; the sequence is NDRVAILVDDMADTCV.

The protein belongs to the ribose-phosphate pyrophosphokinase family. In terms of assembly, homodimer. The active form is probably a hexamer composed of 3 homodimers. Mg(2+) is required as a cofactor. Testis.

It catalyses the reaction D-ribose 5-phosphate + ATP = 5-phospho-alpha-D-ribose 1-diphosphate + AMP + H(+). The protein operates within metabolic intermediate biosynthesis; 5-phospho-alpha-D-ribose 1-diphosphate biosynthesis; 5-phospho-alpha-D-ribose 1-diphosphate from D-ribose 5-phosphate (route I): step 1/1. Activated by magnesium and inorganic phosphate. Functionally, catalyzes the synthesis of phosphoribosylpyrophosphate (PRPP) that is essential for nucleotide synthesis. The chain is Ribose-phosphate pyrophosphokinase 3 (PRPS1L1) from Homo sapiens (Human).